The sequence spans 175 residues: uncharacterized protein (175 aa).

Residues 1-14 (MNTSSRIQLPSSND) show a composition bias toward polar residues. 2 disordered regions span residues 1–31 (MNTS…SKRS) and 127–175 (ARSR…QSKR). Over residues 16 to 27 (HVYDGRSNEPKA) the composition is skewed to basic and acidic residues. Positions 130–149 (RASSVSNSRLNSRTNSSVSL) are enriched in low complexity. The span at 154 to 175 (GSSSWKNKIKNAVSNVTDQSKR) shows a compositional bias: polar residues.

Its subcellular location is the cytoplasm. The protein resides in the nucleus. This is an uncharacterized protein from Schizosaccharomyces pombe (strain 972 / ATCC 24843) (Fission yeast).